The sequence spans 232 residues: LexA repressor (232 aa).

The interval 1–25 is disordered; the sequence is MSDDSSDSTSGAGSGRGRDSGLTER. Over residues 16–25 the composition is skewed to basic and acidic residues; it reads RGRDSGLTER. Residues 46 to 66 constitute a DNA-binding region (H-T-H motif); sequence IREIGDAVGLTSTSSVAHQLR. Active-site for autocatalytic cleavage activity residues include Ser156 and Lys193.

The protein belongs to the peptidase S24 family. In terms of assembly, homodimer.

The catalysed reaction is Hydrolysis of Ala-|-Gly bond in repressor LexA.. Functionally, represses a number of genes involved in the response to DNA damage (SOS response), including recA and lexA. In the presence of single-stranded DNA, RecA interacts with LexA causing an autocatalytic cleavage which disrupts the DNA-binding part of LexA, leading to derepression of the SOS regulon and eventually DNA repair. The polypeptide is LexA repressor (Mycolicibacterium vanbaalenii (strain DSM 7251 / JCM 13017 / BCRC 16820 / KCTC 9966 / NRRL B-24157 / PYR-1) (Mycobacterium vanbaalenii)).